A 92-amino-acid chain; its full sequence is MVVIVYVIVAYDVNVERVNRVKKFLRRYLNWVQNSLFEGELSSADLEEVKMGLREIINEDEDMVVIYRFRSADAFKREVMGIEKGLGGEEVI.

Asp12 provides a ligand contact to Mg(2+).

This sequence belongs to the CRISPR-associated endoribonuclease Cas2 protein family. In terms of assembly, homodimer, forms a heterotetramer with a Cas1 homodimer. Mg(2+) serves as cofactor.

CRISPR (clustered regularly interspaced short palindromic repeat), is an adaptive immune system that provides protection against mobile genetic elements (viruses, transposable elements and conjugative plasmids). CRISPR clusters contain sequences complementary to antecedent mobile elements and target invading nucleic acids. CRISPR clusters are transcribed and processed into CRISPR RNA (crRNA). Functions as a ssRNA-specific endoribonuclease. Involved in the integration of spacer DNA into the CRISPR cassette. This Archaeoglobus fulgidus (strain ATCC 49558 / DSM 4304 / JCM 9628 / NBRC 100126 / VC-16) protein is CRISPR-associated endoribonuclease Cas2 2 (cas22).